The sequence spans 504 residues: Maturase K (504 aa).

This sequence belongs to the intron maturase 2 family. MatK subfamily.

The protein resides in the plastid. The protein localises to the chloroplast. In terms of biological role, usually encoded in the trnK tRNA gene intron. Probably assists in splicing its own and other chloroplast group II introns. This is Maturase K from Adansonia digitata (Baobab tree).